Here is an 858-residue protein sequence, read N- to C-terminus: DNA mismatch repair protein MutS (858 aa).

613–620 is an ATP binding site; the sequence is GPNMAGKS.

This sequence belongs to the DNA mismatch repair MutS family.

This protein is involved in the repair of mismatches in DNA. It is possible that it carries out the mismatch recognition step. This protein has a weak ATPase activity. This Dehalococcoides mccartyi (strain ATCC BAA-2100 / JCM 16839 / KCTC 5957 / BAV1) protein is DNA mismatch repair protein MutS.